The primary structure comprises 308 residues: uncharacterized protein (308 aa).

This is an uncharacterized protein from Bos taurus (Bovine).